A 210-amino-acid chain; its full sequence is DNA-directed RNA polymerases I, II, and III subunit RPABC1 (210 aa).

Met-1 carries the N-acetylmethionine modification. Residue Lys-81 forms a Glycyl lysine isopeptide (Lys-Gly) (interchain with G-Cter in SUMO2) linkage.

The protein belongs to the archaeal Rpo5/eukaryotic RPB5 RNA polymerase subunit family. Component of the RNA polymerase I (Pol I), RNA polymerase II (Pol II) and RNA polymerase III (Pol III) complexes consisting of at least 13, 12 and 17 subunits, respectively. Pol I complex consists of a ten-subunit catalytic core composed of POLR1A/RPA1, POLR1B/RPA2, POLR1C/RPAC1, POLR1D/RPAC2, POLR1H/RPA12, POLR2E/RPABC1, POLR2F/RPABC2, POLR2H/RPABC3, POLR2K/RPABC4 and POLR2L/RPABC5; a mobile stalk subunit POLR1F/RPA43 protruding from the core and additional subunits homologous to general transcription factors POLR1E/RPA49 and POLR1G/RPA34. Part of Pol I pre-initiation complex (PIC), in which Pol I core assembles with RRN3 and promoter-bound UTBF and SL1/TIF-IB complex. Pol II complex contains a ten-subunit catalytic core composed of POLR2A/RPB1, POLR2B/RPB2, POLR2C/RPB3, POLR2I/RPB9, POLR2J/RPB11, POLR2E/RPABC1, POLR2F/RPABC2, POLR2H/RPABC3, POLR2K/RPABC4 and POLR2L/RPABC5 and a mobile stalk composed of two subunits POLR2D/RPB4 and POLR2G/RPB7. Part of Pol II(G) complex, in which Pol II core associates with an additional subunit POLR2M; unlike conventional Pol II, Pol II(G) functions as a transcriptional repressor. Part of TBP-based Pol II pre-initiation complex (PIC), in which Pol II core assembles with general transcription factors and other specific initiation factors including GTF2E1, GTF2E2, GTF2F1, GTF2F2, TCEA1, ERCC2, ERCC3, GTF2H2, GTF2H3, GTF2H4, GTF2H5, GTF2A1, GTF2A2, GTF2B and TBP; this large multi-subunit PIC complex mediates DNA unwinding and targets Pol II core to the transcription start site where the first phosphodiester bond forms. In Pol II complex, this subunit is present in 2-fold molar excess over the other subunits. Pol III complex consists of a ten-subunit catalytic core composed of POLR3A/RPC1, POLR3B/RPC2, POLR1C/RPAC1, POLR1D/RPAC2, POLR3K/RPC10, POLR2E/RPABC1, POLR2F/RPABC2, POLR2H/RPABC3, POLR2K/RPABC4 and POLR2L/RPABC5; a mobile stalk composed of two subunits POLR3H/RPC8 and CRCP/RPC9, protruding from the core and functioning primarily in transcription initiation; and additional subunits homologous to general transcription factors of the RNA polymerase II machinery, POLR3C/RPC3-POLR3F/RPC6-POLR3G/RPC7 heterotrimer required for transcription initiation and POLR3D/RPC4-POLR3E/RPC5 heterodimer involved in both transcription initiation and termination. Component of the PAQosome complex which is responsible for the biogenesis of several protein complexes and which consists of R2TP complex members RUVBL1, RUVBL2, RPAP3 and PIH1D1, URI complex members PFDN2, PFDN6, PDRG1, UXT and URI1 as well as ASDURF, POLR2E and DNAAF10/WDR92. Interacts with URI1.

Its subcellular location is the nucleus. It localises to the nucleolus. DNA-dependent RNA polymerase catalyzes the transcription of DNA into RNA using the four ribonucleoside triphosphates as substrates. Common component of RNA polymerases I, II and III which synthesize ribosomal RNA precursors, mRNA precursors and many functional non-coding RNAs, and small RNAs, such as 5S rRNA and tRNAs, respectively. Pol II is the central component of the basal RNA polymerase II transcription machinery. Pols are composed of mobile elements that move relative to each other. In Pol II, POLR2E/RPABC1 is part of the lower jaw surrounding the central large cleft and thought to grab the incoming DNA template. Seems to be the major component in this process. The polypeptide is DNA-directed RNA polymerases I, II, and III subunit RPABC1 (POLR2E) (Pongo abelii (Sumatran orangutan)).